The primary structure comprises 292 residues: Aquaporin-3 (292 aa).

The Cytoplasmic segment spans residues 1-24 (MGRQKELVSRCGEMLHIRYRLLRQ). A helical membrane pass occupies residues 25–42 (ALAECLGTLILVMFGCGS). The Extracellular portion of the chain corresponds to 43 to 56 (VAQVVLSRGTHGGF). The chain crosses the membrane as a helical span at residues 57–74 (LTINLAFGFAVTLGILIA). Residues 75 to 78 (GQVS) are Cytoplasmic-facing. An intramembrane region (discontinuously helical) is located at residues 79–92 (GAHLNPAVTFAMCF). Residues 83-85 (NPA) carry the NPA 1 motif. Residues 93–100 (LAREPWIK) are Cytoplasmic-facing. The chain crosses the membrane as a helical span at residues 101-121 (LPIYTLAQTLGAFLGAGIVFG). Residues 122–159 (LYYDAIWHFADNQLFVSGPNGTAGIFATYPSGHLDMIN) are Extracellular-facing. The N-linked (GlcNAc...) asparagine glycan is linked to Asn141. The chain crosses the membrane as a helical span at residues 160–177 (GFFDQFIGTASLIVCVLA). Topologically, residues 178-189 (IVDPYNNPVPRG) are cytoplasmic. Residues 190-206 (LEAFTVGLVVLVIGTSM) form a helical membrane-spanning segment. The Extracellular portion of the chain corresponds to 207–210 (GFNS). The segment at residues 211-224 (GYAVNPARDFGPRL) is an intramembrane region (discontinuously helical). Positions 215–217 (NPA) match the NPA 2 motif. At 225–242 (FTALAGWGSAVFTTGQHW) the chain is on the extracellular side. The chain crosses the membrane as a helical span at residues 243–264 (WWVPIVSPLLGSIAGVFVYQLM). At 265 to 292 (IGCHLEQPPPSNEEENVKLAHVKHKEQI) the chain is on the cytoplasmic side.

The protein belongs to the MIP/aquaporin (TC 1.A.8) family. As to quaternary structure, homotetramer; each monomer provides an independent glycerol/water pore. Could also exist in other oligomeric states. In terms of tissue distribution, widely expressed in epithelial cells of kidney (collecting ducts) and airways, in keratinocytes, immature dendritic cells and erythrocytes. Isoform 2 is not detectable in erythrocytes at the protein level.

The protein resides in the cell membrane. It localises to the basolateral cell membrane. It catalyses the reaction glycerol(in) = glycerol(out). It carries out the reaction H2O(in) = H2O(out). The catalysed reaction is H2O2(out) = H2O2(in). The enzyme catalyses urea(in) = urea(out). Glycerol transport is regulated by pH, with the porin being permeable to glycerol at pH 7.4 but not at pH 5.5. Water permeability, however, is not influenced by pH. Its function is as follows. Aquaglyceroporins form homotetrameric transmembrane channels, with each monomer independently mediating glycerol and water transport across the plasma membrane along their osmotic gradient. Could also be permeable to urea. Also participates in cell permeability to H2O2 and H2O2-mediated signaling. In skin, transports glycerol to the epidermis and stratum corneum, where it maintains hydration, elasticity, and supports lipid biosynthesis for barrier repair. In kidney, contributes to the reabsorption of water, helping the body maintain proper fluid balance. This chain is Aquaporin-3, found in Homo sapiens (Human).